The sequence spans 156 residues: Cyanate hydratase (156 aa).

Catalysis depends on residues Arg-96, Glu-99, and Ser-122.

The protein belongs to the cyanase family.

It carries out the reaction cyanate + hydrogencarbonate + 3 H(+) = NH4(+) + 2 CO2. Catalyzes the reaction of cyanate with bicarbonate to produce ammonia and carbon dioxide. This Mycobacteroides abscessus (strain ATCC 19977 / DSM 44196 / CCUG 20993 / CIP 104536 / JCM 13569 / NCTC 13031 / TMC 1543 / L948) (Mycobacterium abscessus) protein is Cyanate hydratase.